A 615-amino-acid polypeptide reads, in one-letter code: Vitamin B12 transporter BtuB (615 aa).

The first 20 residues, 1-20 (MIKKVSLMTALSVTAFSGWA), serve as a signal peptide directing secretion. The TonB box signature appears at 25 to 32 (DSLVVTAN). In terms of domain architecture, TBDR plug spans 37–151 (PANTVLAPTS…IGGVVNIITT (115 aa)). Cyanocob(III)alamin is bound by residues Ser-84, Asn-91, and 109–110 (VT). The region spanning 154–615 (KDGTTLNAGV…EYTLSGSYTF (462 aa)) is the TBDR beta-barrel domain. 3 consecutive transmembrane segments (beta stranded) span residues 157–164 (TTLNAGVG), 168–177 (YQNYGGSTQQ), and 183–194 (TRVTLAGDYTYT). Residues Asp-198, Gln-210, Asp-212, and Asp-214 each coordinate Ca(2+). 2 beta stranded membrane-spanning segments follow: residues 216–226 (YMNKTIYGALE) and 231–247 (DQWS…NRTA). Residues Tyr-248 and Asp-249 each coordinate Ca(2+). Position 250 (Ala-250) interacts with cyanocob(III)alamin. Residue Asp-262 coordinates Ca(2+). 17 consecutive transmembrane segments (beta stranded) span residues 264-278 (RQLY…LRFN), 280-297 (GIFH…KDYN), 310-326 (TLDE…NSVD), 329-338 (HGNVGAGVDW), 354-370 (TNLR…QKFG), 372-382 (FTLEGAARSDD), 386-401 (FGRH…WEFI), 404-418 (YRFI…KAPN), 435-444 (ESKQWEGAFE), 450-459 (VSWRVSAYRN), 474-491 (YYNV…TASF), 495-510 (PLTH…ARNA), 518-530 (RRAK…QLDT), 536-551 (DWSL…YDTD), 559-573 (KVKM…LAVS), 586-597 (IANLFDKDYETV), and 603-615 (AGRE…SYTF). Thr-310 is a binding site for cyanocob(III)alamin. Arg-518 contacts cyanocob(III)alamin. Residues 598–615 (YGYETAGREYTLSGSYTF) carry the TonB C-terminal box motif.

Belongs to the TonB-dependent receptor family. BtuB (TC 1.B.14.3.1) subfamily.

It localises to the cell outer membrane. In terms of biological role, involved in the active translocation of vitamin B12 (cyanocobalamin) across the outer membrane to the periplasmic space. It derives its energy for transport by interacting with the trans-periplasmic membrane protein TonB. The protein is Vitamin B12 transporter BtuB of Enterobacter sp. (strain 638).